The following is a 421-amino-acid chain: Polymerase delta-interacting protein 3 (421 aa).

A2 carries the post-translational modification N-acetylalanine. S5 is modified (phosphoserine). Position 33 is an omega-N-methylarginine (R33). Phosphoserine occurs at positions 44 and 127. T140 is subject to Phosphothreonine. K200 is covalently cross-linked (Glycyl lysine isopeptide (Lys-Gly) (interchain with G-Cter in SUMO2)). Phosphoserine is present on residues S204, S215, and S217. A Glycyl lysine isopeptide (Lys-Gly) (interchain with G-Cter in SUMO2) cross-link involves residue K223. S244 is subject to Phosphoserine. A Glycyl lysine isopeptide (Lys-Gly) (interchain with G-Cter in SUMO2) cross-link involves residue K248. S275 bears the Phosphoserine mark. In terms of domain architecture, RRM spans 280–351; that stretch reads TKMTVNNLHP…QPMKCNLHMN (72 aa). The span at 370 to 379 shows a compositional bias: basic and acidic residues; it reads SMKKESELPR. Residues 370 to 393 form a disordered region; it reads SMKKESELPRRVNSASSSNPPAEV. K372 is covalently cross-linked (Glycyl lysine isopeptide (Lys-Gly) (interchain with G-Cter in SUMO2)). 2 positions are modified to phosphoserine; by RPS6KB1: S383 and S385. A Glycyl lysine isopeptide (Lys-Gly) (interchain with G-Cter in SUMO2) cross-link involves residue K418.

As to quaternary structure, interacts with POLD2. Interacts with NCBP1 and EIF4A3. Associates with the multiprotein exon junction complex (EJC). Interacts with RPS6KB1 (activated). Interacts with ERH. Interacts with THOC2, DDX39B and ZC3H11A; the interactions are ATP-dependent and indicative for an association with the TREX complex. Post-translationally, phosphorylated at Ser-383 and Ser-385 by RPS6KB1.

The protein resides in the nucleus. The protein localises to the nucleus speckle. Its subcellular location is the cytoplasm. Is involved in regulation of translation. Is preferentially associated with CBC-bound spliced mRNA-protein complexes during the pioneer round of mRNA translation. Contributes to enhanced translational efficiency of spliced over nonspliced mRNAs. Recruits activated ribosomal protein S6 kinase beta-1 I/RPS6KB1 to newly synthesized mRNA. Involved in nuclear mRNA export; probably mediated by association with the TREX complex. The protein is Polymerase delta-interacting protein 3 (POLDIP3) of Homo sapiens (Human).